A 156-amino-acid polypeptide reads, in one-letter code: Small ribosomal subunit protein uS7 (156 aa).

The protein belongs to the universal ribosomal protein uS7 family. Part of the 30S ribosomal subunit. Contacts proteins S9 and S11.

Its function is as follows. One of the primary rRNA binding proteins, it binds directly to 16S rRNA where it nucleates assembly of the head domain of the 30S subunit. Is located at the subunit interface close to the decoding center, probably blocks exit of the E-site tRNA. The sequence is that of Small ribosomal subunit protein uS7 from Citrifermentans bemidjiense (strain ATCC BAA-1014 / DSM 16622 / JCM 12645 / Bem) (Geobacter bemidjiensis).